Consider the following 468-residue polypeptide: Glutamate--tRNA ligase (468 aa).

A 'HIGH' region motif is present at residues 8–18; it reads PSPTGFLHVGG. Residues Cys-97, Cys-99, Cys-124, and Asp-126 each coordinate Zn(2+). A 'KMSKS' region motif is present at residues 236–240; sequence KLSKR. Lys-239 is a binding site for ATP.

Belongs to the class-I aminoacyl-tRNA synthetase family. Glutamate--tRNA ligase type 1 subfamily. As to quaternary structure, monomer. Requires Zn(2+) as cofactor.

The protein localises to the cytoplasm. It catalyses the reaction tRNA(Glu) + L-glutamate + ATP = L-glutamyl-tRNA(Glu) + AMP + diphosphate. Functionally, catalyzes the attachment of glutamate to tRNA(Glu) in a two-step reaction: glutamate is first activated by ATP to form Glu-AMP and then transferred to the acceptor end of tRNA(Glu). This chain is Glutamate--tRNA ligase, found in Francisella tularensis subsp. mediasiatica (strain FSC147).